Consider the following 391-residue polypeptide: Na(+)/H(+) antiporter NhaA (391 aa).

The next 11 helical transmembrane spans lie at 14–34 (AGGI…NSPL), 59–79 (LIHW…GLEV), 95–115 (SLPT…YLIF), 124–144 (VGWA…MALL), 154–174 (VFLL…IALF), 177–197 (TDLS…LIGL), 213–233 (LILW…GVII), 261–281 (FIIL…GMSL), 292–312 (IALG…YIAV), 331–351 (VAVM…LAFV), and 363–383 (LGIL…LSKV).

Belongs to the NhaA Na(+)/H(+) (TC 2.A.33) antiporter family.

It is found in the cell inner membrane. It catalyses the reaction Na(+)(in) + 2 H(+)(out) = Na(+)(out) + 2 H(+)(in). Its function is as follows. Na(+)/H(+) antiporter that extrudes sodium in exchange for external protons. The protein is Na(+)/H(+) antiporter NhaA of Shewanella pealeana (strain ATCC 700345 / ANG-SQ1).